A 229-amino-acid chain; its full sequence is Histidine biosynthesis bifunctional protein HisIE (229 aa).

A phosphoribosyl-AMP cyclohydrolase region spans residues M1–V127. A phosphoribosyl-ATP pyrophosphohydrolase region spans residues V128–S229.

This sequence in the N-terminal section; belongs to the PRA-CH family. In the C-terminal section; belongs to the PRA-PH family.

The protein resides in the cytoplasm. It catalyses the reaction 1-(5-phospho-beta-D-ribosyl)-ATP + H2O = 1-(5-phospho-beta-D-ribosyl)-5'-AMP + diphosphate + H(+). The enzyme catalyses 1-(5-phospho-beta-D-ribosyl)-5'-AMP + H2O = 1-(5-phospho-beta-D-ribosyl)-5-[(5-phospho-beta-D-ribosylamino)methylideneamino]imidazole-4-carboxamide. The protein operates within amino-acid biosynthesis; L-histidine biosynthesis; L-histidine from 5-phospho-alpha-D-ribose 1-diphosphate: step 2/9. Its pathway is amino-acid biosynthesis; L-histidine biosynthesis; L-histidine from 5-phospho-alpha-D-ribose 1-diphosphate: step 3/9. The sequence is that of Histidine biosynthesis bifunctional protein HisIE from Wolinella succinogenes (strain ATCC 29543 / DSM 1740 / CCUG 13145 / JCM 31913 / LMG 7466 / NCTC 11488 / FDC 602W) (Vibrio succinogenes).